Here is a 156-residue protein sequence, read N- to C-terminus: Small ribosomal subunit protein uS7 (156 aa).

It belongs to the universal ribosomal protein uS7 family. Part of the 30S ribosomal subunit. Contacts proteins S9 and S11.

Its function is as follows. One of the primary rRNA binding proteins, it binds directly to 16S rRNA where it nucleates assembly of the head domain of the 30S subunit. Is located at the subunit interface close to the decoding center, probably blocks exit of the E-site tRNA. The sequence is that of Small ribosomal subunit protein uS7 from Alcanivorax borkumensis (strain ATCC 700651 / DSM 11573 / NCIMB 13689 / SK2).